The chain runs to 421 residues: MKQSVLRFLADLRFAISILLIIASCSVIGTVIEQDQSIEIYKLNYPLTNRIFGFLSWDIILKFGLDHVYKTWWFLGFIALFGLSLFTCTILQQFPSLKIARRCQFFRTTQQFGLLKLSRNLGNLSLSQLLFRIKKNQYSIFQQKNIVYCYKGLIGRIAPIIVHFSMILILIGAIFGALNGFKAQELIPKTEAFHVQNILSNGQLTRIPKVVSRVNDFWITYTKQATVAQFYSDVSILNTEGNEIVRKTIFVNSPIKYNNIDFYQTDWNVIGLRVQNDTSSILQYPLINLTNAGNKVWVTWIPSDSEFKKGLTILVDNLQGYCSIYDESGIFVGNLELNETFNLNMPITLVDILSSTGLQIKTDPGILLIYTGFLFLMLSTLISYITYSQIWIIQTNRQIFVGGNTTRATFDFEIEFLKLIK.

The next 3 membrane-spanning stretches (helical) occupy residues 12–32 (LRFAISILLIIASCSVIGTVI), 71–91 (TWWFLGFIALFGLSLFTCTIL), and 157–177 (IAPIIVHFSMILILIGAIFGA).

Belongs to the Ccs1/CcsB family. As to quaternary structure, may interact with CcsA.

It localises to the plastid. The protein localises to the chloroplast thylakoid membrane. Its function is as follows. Required during biogenesis of c-type cytochromes (cytochrome c6 and cytochrome f) at the step of heme attachment. In Trieres chinensis (Marine centric diatom), this protein is Cytochrome c biogenesis protein Ccs1.